Consider the following 417-residue polypeptide: Lissencephaly-1 homolog (417 aa).

The 33-residue stretch at 7–39 (QKEELNGAILDYFDSSGYKLTSTEFTKETNIEL) folds into the LisH domain. Residues 52–80 (TSVIRLQKKVMDLEAKVSQLEEELNNGGR) adopt a coiled-coil conformation. The disordered stretch occupies residues 72–93 (EEELNNGGRGPARRGKEDALPR). WD repeat units follow at residues 102 to 143 (GHRN…RTLK), 144 to 185 (GHTN…KTLH), 186 to 225 (GHDHNVSCVRFLPSGDQLVSSSRDKSIKVWETATGYCTKT), 228 to 267 (GHEDWVRKVIVSEDGTTLASCSNDQTARVWNLAKGECLLT), 270 to 339 (EHSH…CLQT), 342 to 383 (GHDN…KTIN), and 385 to 417 (AHSHFISCLDFCSHNPHIATGGVDDIIKIWKLG).

This sequence belongs to the WD repeat LIS1/nudF family.

The protein resides in the cytoplasm. Its subcellular location is the cytoskeleton. The protein localises to the microtubule organizing center. It is found in the centrosome. Functionally, positively regulates the activity of the minus-end directed microtubule motor protein dynein. May enhance dynein-mediated microtubule sliding by targeting dynein to the microtubule plus end. Required for several dynein- and microtubule-dependent processes. In Heterostelium pallidum (strain ATCC 26659 / Pp 5 / PN500) (Cellular slime mold), this protein is Lissencephaly-1 homolog.